Here is an 816-residue protein sequence, read N- to C-terminus: Sucrose synthase 2 (816 aa).

Residues Met-280–Thr-757 form a GT-B glycosyltransferase region.

It belongs to the glycosyltransferase 1 family. Plant sucrose synthase subfamily. Forms homotetramers and heterotetramers with SS1, all three possible heterotetramers are formed. Abundant in developing endosperm, low in aleurone, and undetected in coleoptiles and roots. Also detected in crude extracts of anthers and in immature embryos.

The catalysed reaction is an NDP-alpha-D-glucose + D-fructose = a ribonucleoside 5'-diphosphate + sucrose + H(+). Sucrose-cleaving enzyme that provides UDP-glucose and fructose for various metabolic pathways. In Hordeum vulgare (Barley), this protein is Sucrose synthase 2 (SS2).